A 485-amino-acid polypeptide reads, in one-letter code: Putative ATP-dependent RNA helicase ste13 (485 aa).

Residues 16 to 38 (DRESFKGQMKAQPVDMRPKTEDV) are disordered. A Q motif motif is present at residues 44–72 (TEFEDYYLKRELLMGIFEAGFERPSPIQE). The region spanning 75-245 (IPIALSGRDI…DKHLNKPYEI (171 aa)) is the Helicase ATP-binding domain. Residue 88–95 (AKNGTGKT) participates in ATP binding. Residues 193 to 196 (DEAD) carry the DEAD box motif. Positions 255 to 415 (GVTQYYAFVD…PIPPSIDPSL (161 aa)) constitute a Helicase C-terminal domain. Positions 437–485 (LAAQQAKGQEGYHNRPNNNRGGHPRGGGNRGGYRQSNRQPRYRGQQKAD) are disordered.

Belongs to the DEAD box helicase family. DDX6/DHH1 subfamily.

The protein localises to the cytoplasm. It localises to the P-body. It catalyses the reaction ATP + H2O = ADP + phosphate + H(+). Its function is as follows. ATP-dependent RNA helicase involved in mRNA turnover, and more specifically in mRNA decapping. Is involved in G1/S DNA-damage checkpoint recovery, probably through the regulation of the translational status of a subset of mRNAs. May also have a role in translation and mRNA nuclear export. The protein is Putative ATP-dependent RNA helicase ste13 (ste13) of Schizosaccharomyces pombe (strain 972 / ATCC 24843) (Fission yeast).